The following is a 433-amino-acid chain: Serine hydroxymethyltransferase (433 aa).

Residue 122–124 (AHV) participates in (6S)-5,6,7,8-tetrahydrofolate binding. Lys-228 is modified (N6-(pyridoxal phosphate)lysine).

Belongs to the SHMT family. In terms of assembly, homodimer. Pyridoxal 5'-phosphate serves as cofactor.

The protein localises to the cytoplasm. The protein operates within amino-acid biosynthesis; glycine biosynthesis; glycine from L-serine: step 1/1. Its function is as follows. Catalyzes the reversible interconversion of serine and glycine with a modified folate serving as the one-carbon carrier. Also exhibits a pteridine-independent aldolase activity toward beta-hydroxyamino acids, producing glycine and aldehydes, via a retro-aldol mechanism. The sequence is that of Serine hydroxymethyltransferase from Sulfolobus acidocaldarius (strain ATCC 33909 / DSM 639 / JCM 8929 / NBRC 15157 / NCIMB 11770).